The chain runs to 629 residues: tRNA uridine 5-carboxymethylaminomethyl modification enzyme MnmG (629 aa).

FAD is bound by residues 14-19, V126, and S181; that span reads GAGHAG. Residue 273–287 participates in NAD(+) binding; it reads GPRYCPSIEDKVVRF. Q370 is a binding site for FAD.

The protein belongs to the MnmG family. Homodimer. Heterotetramer of two MnmE and two MnmG subunits. The cofactor is FAD.

Its subcellular location is the cytoplasm. Functionally, NAD-binding protein involved in the addition of a carboxymethylaminomethyl (cmnm) group at the wobble position (U34) of certain tRNAs, forming tRNA-cmnm(5)s(2)U34. The chain is tRNA uridine 5-carboxymethylaminomethyl modification enzyme MnmG from Geobacillus thermodenitrificans (strain NG80-2).